We begin with the raw amino-acid sequence, 402 residues long: 1-deoxy-D-xylulose 5-phosphate reductoisomerase (402 aa).

NADPH is bound by residues Thr10, Gly11, Ser12, Ile13, Asn38, and Asn124. 1-deoxy-D-xylulose 5-phosphate is bound at residue Lys125. Residue Glu126 coordinates NADPH. Asp150 contributes to the Mn(2+) binding site. Positions 151, 152, 186, and 209 each coordinate 1-deoxy-D-xylulose 5-phosphate. Glu152 is a Mn(2+) binding site. Residue Gly215 coordinates NADPH. Ser222, Asn227, Lys228, and Glu231 together coordinate 1-deoxy-D-xylulose 5-phosphate. Glu231 is a binding site for Mn(2+).

Belongs to the DXR family. It depends on Mg(2+) as a cofactor. Mn(2+) is required as a cofactor.

The enzyme catalyses 2-C-methyl-D-erythritol 4-phosphate + NADP(+) = 1-deoxy-D-xylulose 5-phosphate + NADPH + H(+). The protein operates within isoprenoid biosynthesis; isopentenyl diphosphate biosynthesis via DXP pathway; isopentenyl diphosphate from 1-deoxy-D-xylulose 5-phosphate: step 1/6. Functionally, catalyzes the NADPH-dependent rearrangement and reduction of 1-deoxy-D-xylulose-5-phosphate (DXP) to 2-C-methyl-D-erythritol 4-phosphate (MEP). In Vibrio vulnificus (strain YJ016), this protein is 1-deoxy-D-xylulose 5-phosphate reductoisomerase.